A 324-amino-acid chain; its full sequence is Non-homologous end joining protein Ku 1 (324 aa).

The region spanning 10-193 is the Ku domain; it reads INFGLVTIPV…AKPSDKEIQM (184 aa). The tract at residues 256–324 is disordered; sequence QARRGRGGQV…SGGRRRRRAS (69 aa). Positions 281–292 are enriched in basic and acidic residues; it reads AELDKKAKELGI.

This sequence belongs to the prokaryotic Ku family. Homodimer. Interacts with LigD.

With LigD forms a non-homologous end joining (NHEJ) DNA repair enzyme, which repairs dsDNA breaks with reduced fidelity. Binds linear dsDNA with 5'- and 3'- overhangs but not closed circular dsDNA nor ssDNA. Recruits and stimulates the ligase activity of LigD. The protein is Non-homologous end joining protein Ku 1 of Saccharopolyspora erythraea (strain ATCC 11635 / DSM 40517 / JCM 4748 / NBRC 13426 / NCIMB 8594 / NRRL 2338).